Here is a 309-residue protein sequence, read N- to C-terminus: Aspartate carbamoyltransferase catalytic subunit (309 aa).

Carbamoyl phosphate-binding residues include Arg57 and Thr58. Lys86 provides a ligand contact to L-aspartate. Residues Arg107, His135, and Gln138 each contribute to the carbamoyl phosphate site. Arg168 and Arg228 together coordinate L-aspartate. Carbamoyl phosphate contacts are provided by Leu267 and Pro268.

This sequence belongs to the aspartate/ornithine carbamoyltransferase superfamily. ATCase family. As to quaternary structure, heterooligomer of catalytic and regulatory chains.

It catalyses the reaction carbamoyl phosphate + L-aspartate = N-carbamoyl-L-aspartate + phosphate + H(+). It functions in the pathway pyrimidine metabolism; UMP biosynthesis via de novo pathway; (S)-dihydroorotate from bicarbonate: step 2/3. Its function is as follows. Catalyzes the condensation of carbamoyl phosphate and aspartate to form carbamoyl aspartate and inorganic phosphate, the committed step in the de novo pyrimidine nucleotide biosynthesis pathway. In Nitrosopumilus maritimus (strain SCM1), this protein is Aspartate carbamoyltransferase catalytic subunit.